Reading from the N-terminus, the 529-residue chain is Leucine-rich repeat protein SHOC-2 (529 aa).

2 stretches are compositionally biased toward basic and acidic residues: residues 1 to 29 (MSSN…KESK) and 36 to 57 (KESK…KKDS). Positions 1–87 (MSSNLGKEKD…ATGTRKKSSN (87 aa)) are disordered. LRR repeat units follow at residues 99-122 (EENS…VKEL), 123-145 (TQLT…VGCL), 146-168 (VNLV…LDNL), 169-191 (KKLR…VYRL), 193-214 (SLAT…IKTL), 215-237 (SKLT…IGEL), 239-260 (NLIT…IGSC), 262-283 (QITN…IGNL), 284-306 (SSLS…LAKC), 307-329 (SELD…LLSS), 331-353 (VKLT…GPSQ), 354-377 (FSTI…IFSR), 379-400 (KVLS…DFGT), 401-424 (WTSM…VSGL), 425-447 (VSLE…IGNL), 448-471 (RKLR…AYLK), 473-493 (LQKL…IGHL), and 494-516 (TNLT…IGKI).

Belongs to the SHOC2 family.

It localises to the cytoplasm. The protein localises to the nucleus. Functionally, core component of the SHOC2-MRAS-PP1c (SMP) holophosphatase complex that regulates activation of the MAPK pathway. Acts as a scaffolding protein in the SMP complex. The SMP complex specifically dephosphorylates the inhibitory phosphorylation Raf kinases, stimulating their kinase activities. The SMP complex enhances the dephosphorylation activity and substrate specificity of PP1c. In Gallus gallus (Chicken), this protein is Leucine-rich repeat protein SHOC-2 (SHOC2).